The primary structure comprises 199 residues: MVKMLVLYYSAYGYMEQMAKAAAEGAREGGAEVTLKRVPELVPEEVAKASHYKIDQEAPIATPGELADYDAIIIGTATRYGMMASQMKNFLDQTGGLWAKGALINKVGSVMVSTATQHGGAELALISTQWQMQHHGMIIVPLSYACREQMGNDVVRGGAPYGMTTTADGDGSRQPSAQELDGARFQGRRVAEITAKLHG.

Residues 4–190 form the Flavodoxin-like domain; it reads MLVLYYSAYG…DGARFQGRRV (187 aa). FMN contacts are provided by residues 10-15 and 78-80; these read SAYGYM and TRY. Position 12 (Tyr12) interacts with NAD(+). Position 98 (Trp98) interacts with substrate. FMN is bound by residues 113–119 and His134; that span reads STATQHG. The disordered stretch occupies residues 157-181; that stretch reads GGAPYGMTTTADGDGSRQPSAQELD. Residues 163-177 show a composition bias toward polar residues; that stretch reads MTTTADGDGSRQPSA.

This sequence belongs to the WrbA family. FMN is required as a cofactor.

It catalyses the reaction a quinone + NADH + H(+) = a quinol + NAD(+). It carries out the reaction a quinone + NADPH + H(+) = a quinol + NADP(+). The protein is NAD(P)H dehydrogenase (quinone) of Brucella melitensis biotype 2 (strain ATCC 23457).